The sequence spans 957 residues: Nitrite reductase [NAD(P)H] large subunit (957 aa).

44–79 (YDRVHLTEYFAGRSAESLSLVEGDFFTQHGIELRLS) serves as a coordination point for FAD. 193–225 (LREKISELGVGVHTSKATTEIVRNEQGLQLNFR) lines the NAD(+) pocket. [2Fe-2S] cluster-binding residues include cysteine 423, cysteine 425, cysteine 457, and cysteine 460. [4Fe-4S] cluster is bound by residues cysteine 639, cysteine 645, cysteine 679, and cysteine 683. Residue cysteine 683 coordinates siroheme.

It belongs to the nitrite and sulfite reductase 4Fe-4S domain family. As to quaternary structure, homodimer which associates with NirD. Siroheme serves as cofactor. [2Fe-2S] cluster is required as a cofactor. The cofactor is [4Fe-4S] cluster. Requires FAD as cofactor.

It carries out the reaction NH4(+) + 3 NADP(+) + 2 H2O = nitrite + 3 NADPH + 5 H(+). The catalysed reaction is NH4(+) + 3 NAD(+) + 2 H2O = nitrite + 3 NADH + 5 H(+). It participates in nitrogen metabolism; nitrate reduction (assimilation). This is Nitrite reductase [NAD(P)H] large subunit (nasB) from Klebsiella oxytoca.